We begin with the raw amino-acid sequence, 140 residues long: Large ribosomal subunit protein uL15 (140 aa).

The tract at residues 1–32 (MDTKKFRGSRTCGGGTHKNRRGAGNRGGRGKA) is disordered.

This sequence belongs to the universal ribosomal protein uL15 family. Part of the 50S ribosomal subunit.

Functionally, binds to the 23S rRNA. In Methanosarcina acetivorans (strain ATCC 35395 / DSM 2834 / JCM 12185 / C2A), this protein is Large ribosomal subunit protein uL15.